We begin with the raw amino-acid sequence, 606 residues long: ATP-dependent rRNA helicase SPB4 (606 aa).

Positions Trp-7–Ala-35 match the Q motif motif. The region spanning Ile-38–Ile-224 is the Helicase ATP-binding domain. Ser-51–Thr-58 contacts ATP. A DEAD box motif is present at residues Asp-172–Asp-175. The 157-residue stretch at Lys-248–Thr-404 folds into the Helicase C-terminal domain. A Phosphoserine modification is found at Ser-254. A coiled-coil region spans residues Lys-539–Trp-582.

Belongs to the DEAD box helicase family. DDX55/SPB4 subfamily. In terms of assembly, component of pre-60S ribosomal complexes.

It localises to the nucleus. It is found in the nucleolus. It carries out the reaction ATP + H2O = ADP + phosphate + H(+). Its function is as follows. ATP-binding RNA helicase involved in the biogenesis of 60S ribosomal subunits. Binds 90S pre-ribosomal particles and dissociates from pre-60S ribosomal particles after processing of 27SB pre-rRNA. Required for the normal formation of 18S rRNA through the processing of pre-rRNAs at sites A0, A1 and A2, and the normal formation of 25S and 5.8S rRNAs through the processing of pre-rRNAs at sites C1 and C2. Also required for recruitment of NOG2 to pre-ribosomes. This Saccharomyces cerevisiae (strain ATCC 204508 / S288c) (Baker's yeast) protein is ATP-dependent rRNA helicase SPB4.